We begin with the raw amino-acid sequence, 627 residues long: (-)-alpha-pinene synthase 2, chloroplastic (627 aa).

A chloroplast-targeting transit peptide spans 1 to 36 (MALVSIAPLASKSCLHKSLSSSAHELKTICRTIPTL). Residues D378, D382, and D530 each contribute to the Mg(2+) site. The short motif at 378-382 (DDMYD) is the DDXXD motif element.

This sequence belongs to the terpene synthase family. Tpsd subfamily. The cofactor is Mg(2+). Mn(2+) is required as a cofactor.

Its subcellular location is the plastid. The protein resides in the chloroplast. It catalyses the reaction (2E)-geranyl diphosphate = (1S,5S)-beta-pinene + diphosphate. The enzyme catalyses (2E)-geranyl diphosphate = (1S,5S)-alpha-pinene + diphosphate. It functions in the pathway terpene metabolism; oleoresin biosynthesis. Terpene synthase (TPS) involved in the biosynthesis of monoterpene natural products included in conifer oleoresin secretions and volatile emissions; these compounds contribute to biotic and abiotic stress defense against herbivores and pathogens. Catalyzes the conversion of (2E)-geranyl diphosphate (GPP) to (1S,5S)-beta-pinene. The sequence is that of (-)-alpha-pinene synthase 2, chloroplastic from Picea glauca (White spruce).